Here is a 135-residue protein sequence, read N- to C-terminus: Galectin-1 (135 aa).

A2 carries the post-translational modification N-acetylalanine. Positions 4-135 (GLVASNLNLK…DFKIKCVAFD (132 aa)) constitute a Galectin domain. An N6-acetyllysine mark is found at K13 and K29. S30 carries the post-translational modification Phosphoserine. Residues 45-49 (HFNPR), H53, N62, and 69-72 (WGAE) contribute to the a beta-D-galactoside site. The residue at position 108 (K108) is an N6-acetyllysine; alternate. K108 is modified (N6-succinyllysine; alternate). N6-acetyllysine is present on K128.

As to quaternary structure, homodimer. Binds LGALS3BP. Interacts with CD2, CD3, CD4, CD6, CD7, CD43, ALCAM and CD45. Interacts with laminin (via poly-N-acetyllactosamine). Interacts with SUSD2. Interacts with cargo receptor TMED10; the interaction mediates the translocation from the cytoplasm into the ERGIC (endoplasmic reticulum-Golgi intermediate compartment) and thereby secretion. Post-translationally, the N-terminus is blocked.

Its subcellular location is the secreted. It localises to the extracellular space. The protein localises to the extracellular matrix. It is found in the cytoplasm. Functionally, lectin that binds beta-galactoside and a wide array of complex carbohydrates. Plays a role in regulating apoptosis, cell proliferation and cell differentiation. Inhibits CD45 protein phosphatase activity and therefore the dephosphorylation of Lyn kinase. Strong inducer of T-cell apoptosis. In Bubalus bubalis (Domestic water buffalo), this protein is Galectin-1.